Here is a 296-residue protein sequence, read N- to C-terminus: 4-hydroxy-tetrahydrodipicolinate synthase (296 aa).

Thr49 is a pyruvate binding site. Catalysis depends on Tyr137, which acts as the Proton donor/acceptor. The active-site Schiff-base intermediate with substrate is Lys166. Residue Ile208 coordinates pyruvate.

The protein belongs to the DapA family. As to quaternary structure, homotetramer; dimer of dimers.

Its subcellular location is the cytoplasm. It carries out the reaction L-aspartate 4-semialdehyde + pyruvate = (2S,4S)-4-hydroxy-2,3,4,5-tetrahydrodipicolinate + H2O + H(+). The protein operates within amino-acid biosynthesis; L-lysine biosynthesis via DAP pathway; (S)-tetrahydrodipicolinate from L-aspartate: step 3/4. In terms of biological role, catalyzes the condensation of (S)-aspartate-beta-semialdehyde [(S)-ASA] and pyruvate to 4-hydroxy-tetrahydrodipicolinate (HTPA). This Chlorobium chlorochromatii (strain CaD3) protein is 4-hydroxy-tetrahydrodipicolinate synthase.